The chain runs to 31 residues: Cyclotide vpub-B (31 aa).

Residues 1–31 (GIIPCGESCVFIPCITSVVGCSCKSKVCYKN) constitute a cross-link (cyclopeptide (Gly-Asn)). Disulfide bonds link Cys5–Cys21, Cys9–Cys23, and Cys14–Cys28.

The protein belongs to the cyclotide family. Bracelet subfamily. In terms of processing, this is a cyclic peptide.

Probably participates in a plant defense mechanism. The sequence is that of Cyclotide vpub-B from Viola pubescens (Downy yellow violet).